Consider the following 1843-residue polypeptide: Xin actin-binding repeat-containing protein 1 (1843 aa).

The span at 1–10 (MADTQTQVAP) shows a compositional bias: polar residues. Positions 1-48 (MADTQTQVAPTPTMRMATAEDLPLPPPPALEDLPLPPPKESFSKFHQQ) are disordered. Positions 1 to 54 (MADTQTQVAPTPTMRMATAEDLPLPPPPALEDLPLPPPKESFSKFHQQRQASEL) are interaction with VASP. A compositionally biased stretch (pro residues) spans 23 to 39 (PLPPPPALEDLPLPPPK). Xin repeat units lie at residues 89 to 104 (GDVQCMRWIFENWRLD), 121 to 136 (GDVQATSRKFEEGSFA), 151 to 166 (GDVRAARWLFETKPLD), and 186 to 201 (GDVQGTRMLFETRPLD). Residues 132–151 (EGSFANSTDQEPTRPQPGGG) form a disordered region. Phosphoserine is present on residues Ser-205, Ser-208, and Ser-213. Xin repeat units lie at residues 226-241 (GDVKKTVKLFQTEPLC) and 264-279 (NAVRSARWLFETRPLD). Ser-295 carries the post-translational modification Phosphoserine. The Xin 7 repeat unit spans residues 302–317 (PDVSATRWIFETQPLD). Position 332 is a phosphoserine (Ser-332). Xin repeat units lie at residues 340–355 (PDVQQQQHLFETRALD) and 376–391 (GDVRSTLWLFETKPLD). Residues 406-432 (DPQDGEGHLSSDSSSALPFSQSAPQRD) form a disordered region. Low complexity predominate over residues 415–429 (SSDSSSALPFSQSAP). Residues 436-451 (GDVKTFKNLFETLPLD) form a Xin 10 repeat. A disordered region spans residues 455–479 (QGEVLAHGSPSREEGTDSAGQAQGI). Xin repeat units follow at residues 507-522 (GDVQGYRWMFETQPLD) and 545-560 (GDVGTARWLFETQPLE). Residues 531–632 (IDVVRGITRQ…AQSCTWMFKP (102 aa)) are interaction with CTNNB1. A compositionally biased stretch (basic and acidic residues) spans 564 to 577 (QREQQERQKEEGKS). Positions 564 to 591 (QREQQERQKEEGKSQGDPQPEAPPKGDV) are disordered. Xin repeat units lie at residues 589–604 (GDVQTIRWLFETCPMS), 621–636 (AEAQSCTWMFKPQPVD), 654–669 (GERQTDRHVFETEPLQ), 691–706 (GQVSRQKEVFQALEAG), and 723–738 (GSVHKFTWLFENCPMG). Disordered regions lie at residues 943-999 (SLRW…QAIG), 1063-1205 (AEAQ…MAWG), 1238-1277 (SGPQAAGASPHPHNAFVPPPPTLPAAVTGPDFPAGAHRAE), 1289-1471 (DPLL…QKEL), and 1561-1696 (MSSL…DVSV). Polar residues-rich tracts occupy residues 1064–1073 (EAQSLHQQVL) and 1080–1089 (PTPTATSNPI). Residues 1294-1311 (SHSSPAGQRTPGGSQTKT) are compositionally biased toward polar residues. Residues 1357–1368 (GQREHQRGERDT) show a composition bias toward basic and acidic residues. Positions 1393–1424 (GHSQPSLQHGLSTTAPRPTKNQATGSNAQSSE) are enriched in polar residues. Positions 1462–1490 (DSLQRNQKELQGLLNQVQALEKEAASSVD) form a coiled coil. Composition is skewed to polar residues over residues 1588–1600 (VTVSSSARPSGSG) and 1663–1679 (SRDSPSSPTFISIQSAT). Positions 1685–1843 (TPSFKGNPDV…SCSYSQPAAQ (159 aa)) are interaction with FLNC.

This sequence belongs to the Xin family. Interacts (via N-terminus) with CTTN; the interaction promotes CTTN localization to intercalated disks in cardiomyocytes. Interacts with CTNNB1. Interacts with FLNC and VASP. Interacts with F-actin. As to expression, expressed in skeletal muscle at areas of Z-disk disruption in a longitudinal pattern spanning one or more sarcomeres (at protein level). Expressed in the heart (at protein level). In terms of tissue distribution, expressed in the heart.

The protein resides in the cell junction. It is found in the adherens junction. Its subcellular location is the desmosome. Its function is as follows. Protects actin filaments from depolymerization. Required for correct cardiac intercalated disk ultrastructure via maintenance of cell-cell adhesion stability, and as a result maintains cardiac organ morphology, conductance and heart beat rhythm. Required for development of normal skeletal muscle morphology and muscle fiber type composition. Plays a role in regulating muscle satellite cell activation and survival, as a result promotes muscle fiber recovery from injury and fatigue. The polypeptide is Xin actin-binding repeat-containing protein 1 (Homo sapiens (Human)).